The following is a 37-amino-acid chain: Photosystem I reaction center subunit VIII (37 aa).

Residues 10 to 30 (IFVPLVGLVFPAIAMASLSLY) traverse the membrane as a helical segment.

It belongs to the PsaI family.

The protein localises to the plastid. The protein resides in the chloroplast thylakoid membrane. Its function is as follows. May help in the organization of the PsaL subunit. The polypeptide is Photosystem I reaction center subunit VIII (Gossypium barbadense (Sea Island cotton)).